The chain runs to 375 residues: Porin Omp2b (375 aa).

The N-terminal stretch at 1–22 (MNIKSLLLGSAAALVAASGAQA) is a signal peptide.

It belongs to the alphaproteobacteria porin family. In terms of assembly, homotrimer.

The protein localises to the cell outer membrane. Functionally, forms passive diffusion pores that allow small molecular weight hydrophilic materials across the outer membrane. This is Porin Omp2b (omp2b) from Brucella suis.